We begin with the raw amino-acid sequence, 339 residues long: Ketol-acid reductoisomerase (NADP(+)) (339 aa).

The 182-residue stretch at 1-182 folds into the KARI N-terminal Rossmann domain; sequence MRVYYDRDAD…GGGRSGIIET (182 aa). NADP(+) is bound by residues 24–27, Arg48, Ser51, Ser53, and 83–86; these read YGSQ and DELQ. His108 is an active-site residue. Position 134 (Gly134) interacts with NADP(+). The region spanning 183 to 328 is the KARI C-terminal knotted domain; the sequence is TFREECETDL…EKLRAMMPWI (146 aa). Mg(2+) contacts are provided by Asp191, Glu195, Glu227, and Glu231. Ser252 serves as a coordination point for substrate.

The protein belongs to the ketol-acid reductoisomerase family. Requires Mg(2+) as cofactor.

The enzyme catalyses (2R)-2,3-dihydroxy-3-methylbutanoate + NADP(+) = (2S)-2-acetolactate + NADPH + H(+). The catalysed reaction is (2R,3R)-2,3-dihydroxy-3-methylpentanoate + NADP(+) = (S)-2-ethyl-2-hydroxy-3-oxobutanoate + NADPH + H(+). The protein operates within amino-acid biosynthesis; L-isoleucine biosynthesis; L-isoleucine from 2-oxobutanoate: step 2/4. It functions in the pathway amino-acid biosynthesis; L-valine biosynthesis; L-valine from pyruvate: step 2/4. Its function is as follows. Involved in the biosynthesis of branched-chain amino acids (BCAA). Catalyzes an alkyl-migration followed by a ketol-acid reduction of (S)-2-acetolactate (S2AL) to yield (R)-2,3-dihydroxy-isovalerate. In the isomerase reaction, S2AL is rearranged via a Mg-dependent methyl migration to produce 3-hydroxy-3-methyl-2-ketobutyrate (HMKB). In the reductase reaction, this 2-ketoacid undergoes a metal-dependent reduction by NADPH to yield (R)-2,3-dihydroxy-isovalerate. This Chelativorans sp. (strain BNC1) protein is Ketol-acid reductoisomerase (NADP(+)).